The primary structure comprises 333 residues: Phosphate acyltransferase (333 aa).

The protein belongs to the PlsX family. As to quaternary structure, homodimer. Probably interacts with PlsY.

It localises to the cytoplasm. It carries out the reaction a fatty acyl-[ACP] + phosphate = an acyl phosphate + holo-[ACP]. Its pathway is lipid metabolism; phospholipid metabolism. Catalyzes the reversible formation of acyl-phosphate (acyl-PO(4)) from acyl-[acyl-carrier-protein] (acyl-ACP). This enzyme utilizes acyl-ACP as fatty acyl donor, but not acyl-CoA. The protein is Phosphate acyltransferase of Clostridium botulinum (strain Alaska E43 / Type E3).